A 470-amino-acid polypeptide reads, in one-letter code: UDP-glycosyltransferase 91A1 (470 aa).

Residues Ser-290, 350-352 (VEQ), 367-375 (HPGWGTIIE), and 389-392 (VYDQ) each bind UDP-alpha-D-glucose.

It belongs to the UDP-glycosyltransferase family.

This chain is UDP-glycosyltransferase 91A1 (UGT91A1), found in Arabidopsis thaliana (Mouse-ear cress).